The chain runs to 342 residues: S-adenosyl-L-methionine-dependent tRNA 4-demethylwyosine synthase (342 aa).

Residues cysteine 45, cysteine 58, and cysteine 71 each coordinate [2Fe-2S] cluster. The 249-residue stretch at 64 to 312 (YGIHSHRCLQ…VKHLPGYHIE (249 aa)) folds into the Radical SAM core domain. [4Fe-4S] cluster-binding residues include cysteine 81, cysteine 85, and cysteine 88.

Belongs to the TYW1 family. As to quaternary structure, monomer. [2Fe-2S] cluster serves as cofactor. [4Fe-4S] cluster is required as a cofactor.

It localises to the cytoplasm. The catalysed reaction is N(1)-methylguanosine(37) in tRNA(Phe) + pyruvate + S-adenosyl-L-methionine = 4-demethylwyosine(37) in tRNA(Phe) + 5'-deoxyadenosine + L-methionine + CO2 + H2O. Its function is as follows. Component of the wyosine derivatives biosynthesis pathway that catalyzes the condensation of N-methylguanine with 2 carbon atoms from pyruvate to form the tricyclic 4-demethylwyosine (imG-14) on guanosine-37 of tRNA(Phe). The protein is S-adenosyl-L-methionine-dependent tRNA 4-demethylwyosine synthase of Pyrococcus horikoshii (strain ATCC 700860 / DSM 12428 / JCM 9974 / NBRC 100139 / OT-3).